The sequence spans 260 residues: 5'-nucleotidase SurE (260 aa).

A divalent metal cation contacts are provided by aspartate 8, aspartate 9, serine 39, and asparagine 93.

This sequence belongs to the SurE nucleotidase family. It depends on a divalent metal cation as a cofactor.

The protein resides in the cytoplasm. The enzyme catalyses a ribonucleoside 5'-phosphate + H2O = a ribonucleoside + phosphate. Functionally, nucleotidase that shows phosphatase activity on nucleoside 5'-monophosphates. The protein is 5'-nucleotidase SurE of Thermofilum pendens (strain DSM 2475 / Hrk 5).